The sequence spans 362 residues: N-acylethanolamine-hydrolyzing acid amidase (362 aa).

The first 33 residues, 1-33 (MGTPAIRAACHGAHLALALLLLLSLSDPWLWAT), serve as a signal peptide directing secretion. N-linked (GlcNAc...) asparagine glycans are attached at residues N42 and N112. C131 (nucleophile) is an active-site residue. 2 N-linked (GlcNAc...) asparagine glycosylation sites follow: N314 and N338.

It belongs to the acid ceramidase family. In terms of assembly, heterodimer of an alpha and a beta subunit, produced by autocatalytic cleavage. Post-translationally, N-glycosylated. Tunicamycin treatment causes a reduction in specific activity against N-palmitoylethanolamine. Autoproteolytic cleavage at pH 4.5 gives rise to the alpha and beta subunit. Cleavage gives rise to a conformation change that activates the enzyme. The same catalytic Cys residue mediates the autoproteolytic cleavage and subsequent hydrolysis of lipid substrates. As to expression, expressed in brain, cecum, colon, heart, ileum, kidney, liver, lung, spleen, stomach, submaxillary gland, testis and thymus.

Its subcellular location is the lysosome. It is found in the membrane. It catalyses the reaction N-hexadecanoylethanolamine + H2O = ethanolamine + hexadecanoate. The enzyme catalyses an N-(long-chain fatty acyl)ethanolamine + H2O = a long-chain fatty acid + ethanolamine. It carries out the reaction N-dodecanoylethanolamine + H2O = dodecanoate + ethanolamine. The catalysed reaction is N-tetradecanoylethanolamine + H2O = tetradecanoate + ethanolamine. It catalyses the reaction an N-acylsphing-4-enine + H2O = sphing-4-enine + a fatty acid. The enzyme catalyses N-hexadecanoylsphing-4-enine + H2O = sphing-4-enine + hexadecanoate. It carries out the reaction N-dodecanoylsphing-4-enine + H2O = dodecanoate + sphing-4-enine. Its pathway is lipid metabolism; fatty acid metabolism. With respect to regulation, stimulated by DTT. Stimulated by nonionic detergent of the polyoxyethylenep-t-octylphenylether type (Triton X-100 or Nonidet P-40) whereas 3-[(3-cholamidopropyl)dimethylammonio]propane-1-sulfonate (CHAPS) and octyl alpha-D-glucopyranoside decrease the N-(long-chain-acyl)ethanolamine deacylase activity. Polysorbate 20 (Tween 20) is inhibitory. Stimulated by endogenous phospholipids such as choline- or ethanolamine-containing phospholipids, and dihydrolipoic acid. Its function is as follows. Degrades bioactive fatty acid amides to their corresponding acids, with the following preference: N-palmitoylethanolamine &gt; N-myristoylethanolamine &gt; N-stearoylethanolamine &gt; N-oleoylethanolamine &gt; N-linoleoylethanolamine &gt; N-arachidonoylethanolamine. This chain is N-acylethanolamine-hydrolyzing acid amidase, found in Rattus norvegicus (Rat).